Here is a 187-residue protein sequence, read N- to C-terminus: Probable DNA-directed RNA polymerase subunit delta (187 aa).

Residues L14 to W81 form the HTH HARE-type domain. The tract at residues E96 to D187 is disordered. 2 stretches are compositionally biased toward acidic residues: residues I117–D149 and E157–D187.

This sequence belongs to the RpoE family. In terms of assembly, RNAP is composed of a core of 2 alpha, a beta and a beta' subunits. The core is associated with a delta subunit and one of several sigma factors.

Functionally, participates in both the initiation and recycling phases of transcription. In the presence of the delta subunit, RNAP displays an increased specificity of transcription, a decreased affinity for nucleic acids, and an increased efficiency of RNA synthesis because of enhanced recycling. This is Probable DNA-directed RNA polymerase subunit delta from Lactococcus lactis subsp. cremoris (strain SK11).